We begin with the raw amino-acid sequence, 216 residues long: Protein ADP-ribose pyrophosphatase ORF38 (216 aa).

The region spanning 1-177 is the Nudix hydrolase domain; that stretch reads MRNAAGLFMI…DYSNYIEFFD (177 aa). The Nudix box signature appears at 48–70; it reads GHRDCCDAKVYETAVREFVEETG.

The protein resides in the host cytoplasm. It is found in the host nucleus. The enzyme catalyses ADP-D-ribose + H2O = D-ribose 5-phosphate + AMP + 2 H(+). In terms of biological role, plays an important role in virus replication most probably through its hydrolyzing ADP-ribose activity in host cells. May function in viral DNA replication or transcription directly, or by removing toxic substances or metabolic intermediates. The chain is Protein ADP-ribose pyrophosphatase ORF38 from Lepidoptera (butterflies and moths).